The primary structure comprises 521 residues: Glutamate--tRNA ligase (521 aa).

The short motif at 13–23 (PSPSGFLHVGG) is the 'HIGH' region element. Positions 253–257 (KLSKR) match the 'KMSKS' region motif. Lys256 provides a ligand contact to ATP.

Belongs to the class-I aminoacyl-tRNA synthetase family. Glutamate--tRNA ligase type 1 subfamily. As to quaternary structure, monomer.

It localises to the cytoplasm. It carries out the reaction tRNA(Glu) + L-glutamate + ATP = L-glutamyl-tRNA(Glu) + AMP + diphosphate. Functionally, catalyzes the attachment of glutamate to tRNA(Glu) in a two-step reaction: glutamate is first activated by ATP to form Glu-AMP and then transferred to the acceptor end of tRNA(Glu). The polypeptide is Glutamate--tRNA ligase (Leptospira interrogans serogroup Icterohaemorrhagiae serovar copenhageni (strain Fiocruz L1-130)).